The primary structure comprises 441 residues: Histidinol dehydrogenase homolog (441 aa).

Position 266 (histidine 266) interacts with Zn(2+). Residues glutamate 334 and histidine 335 each act as proton acceptor in the active site. Position 427 (histidine 427) interacts with Zn(2+).

It belongs to the histidinol dehydrogenase family. Zn(2+) serves as cofactor.

The sequence is that of Histidinol dehydrogenase homolog from Cereibacter sphaeroides (strain ATCC 17023 / DSM 158 / JCM 6121 / CCUG 31486 / LMG 2827 / NBRC 12203 / NCIMB 8253 / ATH 2.4.1.) (Rhodobacter sphaeroides).